Here is a 220-residue protein sequence, read N- to C-terminus: Metalloproteinase inhibitor 2 (220 aa).

The first 26 residues, Met-1 to Ala-26, serve as a signal peptide directing secretion. Cys-27 contacts Zn(2+). Involved in metalloproteinase-binding regions lie at residues Cys-27–Ser-30 and Ser-95–Ala-96. 6 disulfides stabilise this stretch: Cys-27–Cys-98, Cys-29–Cys-127, Cys-39–Cys-152, Cys-154–Cys-201, Cys-159–Cys-164, and Cys-172–Cys-193. The 126-residue stretch at Cys-27–Cys-152 folds into the NTR domain.

The protein belongs to the protease inhibitor I35 (TIMP) family. As to quaternary structure, interacts (via the C-terminal) with MMP2 (via the C-terminal PEX domain); the interaction inhibits the MMP2 activity. Post-translationally, the activity of TIMP2 is dependent on the presence of disulfide bonds. In terms of tissue distribution, predominantly expressed in the lung in alveolar macrophages and epithelial cells. Also found in brain, kidney, intestine, spleen and heart.

It localises to the secreted. In terms of biological role, complexes with metalloproteinases (such as collagenases) and irreversibly inactivates them by binding to their catalytic zinc cofactor. This is Metalloproteinase inhibitor 2 (TIMP2) from Cavia porcellus (Guinea pig).